The following is a 1028-amino-acid chain: MESALTARDRVGVQDFVLLENYTSEAAFIENLRKRFKENLIYTYIGSVLVSVNPYKELEIYSKQHMERYRGVSFYEVSPHIYAIADNSYRSLRTERKDQCILISGESGAGKTEASKKILQYYAVTCPVSDQVETVKDRLLQSNPVLEAFGNAKTLRNDNSSRFGKYMDVQFDYKGAPVGGHILNYLLEKSRVVHQNHGERNFHIFYQLLEGGEEDLLRRLGLDKNAQNYQYLIKGQCARVSSINDKNDWKVVRRALSIINFNDDDIEELLSIVASVLHLGNVQFATDEHGHAQVTTENQIKYLARLLSVDSTVLRESLIHKKIIAKGEELNSPLNLEQAAYARDALAKAIYGRTFSWLVSKINKSLAYKGTDMHKLGSASVIGLLDIYGFEVFQHNSFEQFCINFCNEKLQQLFIELTLKSEQDEYESEGIAWEPVQYFNNKIICDLVEEKFKGIISILDEECLRPGEATDMTFLEKLEDTVKNHPHFVTHKLGDQKTRKVLGRDEFRLLHYAGEVNYSVAGFLDKNNDLLFRNLKEVMCDSGNPIAHQCFNRSELTDKKRPETAATQFKNSLSKLMEILMSKQPSYVRCIKPNDAKQPARFDEVLIRHQVKYLGLIENVRVRRAGFAYRRKYEIFLQRYKSLCPDTWPNWDGRAMDGVAVLVKSLGYKPEEYKMGRTKIFIRFPKTLFATEDALEVRKHSIATFLQARWRGYHQRQKFLHMKHSAVEIQSWWRGTIGRRKAAKRKWAVDVVRRFIKGFIYRNQPRCTENEYFLDYIRYSFLMTLYRNQPKSVLDKSWPVPPPSLREASELLREMCMNNMVWKYCRRINPEWKQQLEQKVVASEIFKDKKDNYPQSVPRLFINTRLGNDEINTKILQQLESQTLTYAVPVVKYDRKGYKPRRRQLLLTQNAAYLVEEAKMKQRIDYANLTGISVSSLSDNLFVLHVKCEDNKQKGDAILQSDHVIETLTKVAITAEKINNININQGSIKFTVGPGKEGIIDFTAGSELLIAKAKNGHLSVVAPRLNSR.

M1 bears the N-acetylmethionine mark. The 685-residue stretch at G12–E696 folds into the Myosin motor domain. ATP contacts are provided by residues N53, Y61, S104–E113, and N157–S161. K348 carries the N6-methyllysine modification. An actin-binding region spans residues L573 to D595. IQ domains lie at K699–E728 and M722–V751. The region spanning K850–R1024 is the TH1 domain.

This sequence belongs to the TRAFAC class myosin-kinesin ATPase superfamily. Myosin family. Interacts (via its IQ motifs) with calmodulin. Expressed in brain and the sacculus of the internal ear.

It localises to the cytoplasm. The protein localises to the cell membrane. The protein resides in the cell projection. Its subcellular location is the ruffle membrane. It is found in the cytoplasmic vesicle. It localises to the stereocilium membrane. Myosins are actin-based motor molecules with ATPase activity. Unconventional myosins serve in intracellular movements. Their highly divergent tails are presumed to bind to membranous compartments, which would be moved relative to actin filaments. The chain is Unconventional myosin-Ic (Myo1c) from Aquarana catesbeiana (American bullfrog).